Here is a 147-residue protein sequence, read N- to C-terminus: Holo-[acyl-carrier-protein] synthase (147 aa).

Mg(2+) is bound by residues D7 and E60.

The protein belongs to the P-Pant transferase superfamily. AcpS family. The cofactor is Mg(2+).

It localises to the cytoplasm. The enzyme catalyses apo-[ACP] + CoA = holo-[ACP] + adenosine 3',5'-bisphosphate + H(+). Its function is as follows. Transfers the 4'-phosphopantetheine moiety from coenzyme A to a Ser of acyl-carrier-protein. This chain is Holo-[acyl-carrier-protein] synthase, found in Bifidobacterium animalis subsp. lactis (strain AD011).